A 352-amino-acid chain; its full sequence is Protein NDRG4 (352 aa).

A phosphoserine mark is found at K293, S298, S317, and S323. The disordered stretch occupies residues 301 to 352 (AVPSASMTRLARSRTASLTSASSVDGSRPQPCAHSDSSEGMGQVNHTMEVSC). Over residues 308–323 (TRLARSRTASLTSASS) the composition is skewed to low complexity. Positions 338 to 352 (SEGMGQVNHTMEVSC) are enriched in polar residues.

It belongs to the NDRG family. Predominantly expressed in the brain (at protein level). Detected in neurons of various parts of brain, including the olfactory bulb, olfactory tuberculum, cerebral cortex, striatum, hippocampus, dentate gyrus, thalamus, hypothalamus, mesencephalon, cerebellum, pons and medulla oblongata.

Its subcellular location is the cytoplasm. The protein localises to the cytosol. In terms of biological role, contributes to the maintenance of intracerebral BDNF levels within the normal range, which is necessary for the preservation of spatial learning and the resistance to neuronal cell death caused by ischemic stress. May enhance growth factor-induced ERK1 and ERK2 phosphorylation. May attenuate NGF-promoted ELK1 phosphorylation in a microtubule-dependent manner. The sequence is that of Protein NDRG4 (Ndrg4) from Mus musculus (Mouse).